The chain runs to 360 residues: S-adenosylmethionine:tRNA ribosyltransferase-isomerase (360 aa).

Belongs to the QueA family. Monomer.

It localises to the cytoplasm. The enzyme catalyses 7-aminomethyl-7-carbaguanosine(34) in tRNA + S-adenosyl-L-methionine = epoxyqueuosine(34) in tRNA + adenine + L-methionine + 2 H(+). It participates in tRNA modification; tRNA-queuosine biosynthesis. Transfers and isomerizes the ribose moiety from AdoMet to the 7-aminomethyl group of 7-deazaguanine (preQ1-tRNA) to give epoxyqueuosine (oQ-tRNA). The protein is S-adenosylmethionine:tRNA ribosyltransferase-isomerase of Rhizobium meliloti (strain 1021) (Ensifer meliloti).